The sequence spans 383 residues: Acetylornithine deacetylase (383 aa).

His-80 is a binding site for Zn(2+). The active site involves Asp-82. Asp-112 serves as a coordination point for Zn(2+). Glu-144 is an active-site residue. The Zn(2+) site is built by Glu-145, Glu-169, and His-355.

The protein belongs to the peptidase M20A family. ArgE subfamily. Homodimer. Zn(2+) is required as a cofactor. The cofactor is Co(2+). Requires glutathione as cofactor.

It localises to the cytoplasm. It carries out the reaction N(2)-acetyl-L-ornithine + H2O = L-ornithine + acetate. It functions in the pathway amino-acid biosynthesis; L-arginine biosynthesis; L-ornithine from N(2)-acetyl-L-ornithine (linear): step 1/1. In terms of biological role, catalyzes the hydrolysis of the amide bond of N(2)-acetylated L-amino acids. Cleaves the acetyl group from N-acetyl-L-ornithine to form L-ornithine, an intermediate in L-arginine biosynthesis pathway, and a branchpoint in the synthesis of polyamines. The chain is Acetylornithine deacetylase from Salmonella agona (strain SL483).